A 378-amino-acid chain; its full sequence is E3 ubiquitin-protein ligase ATL9 (378 aa).

The N-terminal stretch at 1–33 is a signal peptide; that stretch reads MAILDTKSSRWIPHNLLFLLLLLLLQSVPYGFG. The chain crosses the membrane as a helical span at residues 51-71; it reads VVVVITVLFLVIFFMVFGSIF. An RING-type; atypical zinc finger spans residues 135–177; that stretch reads CAVCLCEFEDDETLRLMPPCCHVFHADCVDVWLSEHSTCPLCR. Disordered regions lie at residues 187-211, 300-326, and 350-378; these read DDDD…DPER, ARSS…RKSN, and FSGD…DERV. A compositionally biased stretch (polar residues) spans 193-207; the sequence is ESYSGTDPGTISSST. A compositionally biased stretch (low complexity) spans 301–317; the sequence is RSSRSGYRSGSVGSERS. A compositionally biased stretch (basic and acidic residues) spans 364 to 378; the sequence is AGERSFERLRPDERV.

The protein belongs to the RING-type zinc finger family. ATL subfamily.

It localises to the membrane. The enzyme catalyses S-ubiquitinyl-[E2 ubiquitin-conjugating enzyme]-L-cysteine + [acceptor protein]-L-lysine = [E2 ubiquitin-conjugating enzyme]-L-cysteine + N(6)-ubiquitinyl-[acceptor protein]-L-lysine.. It functions in the pathway protein modification; protein ubiquitination. Its function is as follows. E3 ubiquitin-protein ligase able to catalyze polyubiquitination with ubiquitin-conjugating enzyme E2 UBC8 in vitro. May be involved in the early steps of the plant defense signaling pathway. The chain is E3 ubiquitin-protein ligase ATL9 (ATL9) from Arabidopsis thaliana (Mouse-ear cress).